We begin with the raw amino-acid sequence, 94 residues long: UPF0235 protein Dred_0717 (94 aa).

This sequence belongs to the UPF0235 family.

The chain is UPF0235 protein Dred_0717 from Desulforamulus reducens (strain ATCC BAA-1160 / DSM 100696 / MI-1) (Desulfotomaculum reducens).